The chain runs to 136 residues: Large ribosomal subunit protein uL16 (136 aa).

This sequence belongs to the universal ribosomal protein uL16 family. In terms of assembly, part of the 50S ribosomal subunit.

In terms of biological role, binds 23S rRNA and is also seen to make contacts with the A and possibly P site tRNAs. The polypeptide is Large ribosomal subunit protein uL16 (Shewanella sediminis (strain HAW-EB3)).